We begin with the raw amino-acid sequence, 374 residues long: DNA/RNA-binding protein ALBA4 (374 aa).

This sequence belongs to the histone-like Alba family.

The protein resides in the cytoplasm. It is found in the cell cortex. Its subcellular location is the perinuclear region. In terms of biological role, possesses DNA- and RNA-binding activities. Binds to DNA with relaxed sequence specificity. May associate with the subtelomeric TARE6 repeats. Regulates the abundance of transcript sub-populations in a stage-specific manner. Regulates activation of male gametocytes. Participates in the coordination of sporozoite development in the oocyst. This Plasmodium yoelii yoelii protein is DNA/RNA-binding protein ALBA4.